The following is a 213-amino-acid chain: Peptide methionine sulfoxide reductase MsrA (213 aa).

Cysteine 52 is an active-site residue.

It belongs to the MsrA Met sulfoxide reductase family.

It catalyses the reaction L-methionyl-[protein] + [thioredoxin]-disulfide + H2O = L-methionyl-(S)-S-oxide-[protein] + [thioredoxin]-dithiol. The catalysed reaction is [thioredoxin]-disulfide + L-methionine + H2O = L-methionine (S)-S-oxide + [thioredoxin]-dithiol. Its function is as follows. Has an important function as a repair enzyme for proteins that have been inactivated by oxidation. Catalyzes the reversible oxidation-reduction of methionine sulfoxide in proteins to methionine. The protein is Peptide methionine sulfoxide reductase MsrA of Enterobacter sp. (strain 638).